Reading from the N-terminus, the 344-residue chain is L-rhamnose-proton symporter (344 aa).

The next 10 helical transmembrane spans lie at 4–24 (AITMGIFWHLIGAASAACFYA), 38–58 (WSIGGIVSWLILPWTISALLL), 68–88 (FNLSTLLPVFLFGAMWGIGNI), 101–121 (MGIGIAIGITLIVGTLMTPII), 137–157 (TLLGVLVALIGVGIVTRAGQL), 175–195 (LLLAVMCGIFSAGMSFAMNAA), 214–234 (LPSYVVIMGGGALINLGFCFV), 259–279 (ILLSALGGLMWYLQFFFYAWG), 290–310 (ISWMLHMSFYVLCGGIVGLVL), and 323–343 (VLSLGCVVIIIAANIVGMGMA).

This sequence belongs to the L-rhamnose transporter (TC 2.A.7.6) family.

It is found in the cell inner membrane. It carries out the reaction L-rhamnopyranose(in) + H(+)(in) = L-rhamnopyranose(out) + H(+)(out). Its function is as follows. Uptake of L-rhamnose across the cytoplasmic membrane with the concomitant transport of protons into the cell (symport system). The protein is L-rhamnose-proton symporter of Citrobacter koseri (strain ATCC BAA-895 / CDC 4225-83 / SGSC4696).